Consider the following 404-residue polypeptide: XK-related protein 8 (404 aa).

A run of 8 helical transmembrane segments spans residues 14–34 (FVFS…DVWV), 44–64 (FFWF…VQMF), 167–187 (AVQF…VVDY), 206–226 (SLIY…ALAL), 227–247 (FASV…LVFV), 263–283 (GEWL…FNVA), 292–312 (AIYH…WWCC), and 319–339 (EPYA…GLLF).

It belongs to the XK family.

The protein resides in the cell membrane. It carries out the reaction a 1,2-diacyl-sn-glycero-3-phospho-L-serine(in) = a 1,2-diacyl-sn-glycero-3-phospho-L-serine(out). In terms of biological role, phospholipid scramblase that promotes phosphatidylserine exposure on apoptotic cell surface, possibly by mediating phospholipid scrambling. Phosphatidylserine is a specific marker only present at the surface of apoptotic cells and acts as a specific signal for engulfment. The sequence is that of XK-related protein 8 from Tetraodon nigroviridis (Spotted green pufferfish).